A 357-amino-acid polypeptide reads, in one-letter code: UDP-N-acetylglucosamine--N-acetylmuramyl-(pentapeptide) pyrophosphoryl-undecaprenol N-acetylglucosamine transferase (357 aa).

UDP-N-acetyl-alpha-D-glucosamine contacts are provided by residues 13 to 15 (SAG), Arg166, Ser196, and Gln291.

The protein belongs to the glycosyltransferase 28 family. MurG subfamily.

The protein resides in the cell membrane. The catalysed reaction is di-trans,octa-cis-undecaprenyl diphospho-N-acetyl-alpha-D-muramoyl-L-alanyl-D-glutamyl-meso-2,6-diaminopimeloyl-D-alanyl-D-alanine + UDP-N-acetyl-alpha-D-glucosamine = di-trans,octa-cis-undecaprenyl diphospho-[N-acetyl-alpha-D-glucosaminyl-(1-&gt;4)]-N-acetyl-alpha-D-muramoyl-L-alanyl-D-glutamyl-meso-2,6-diaminopimeloyl-D-alanyl-D-alanine + UDP + H(+). Its pathway is cell wall biogenesis; peptidoglycan biosynthesis. Cell wall formation. Catalyzes the transfer of a GlcNAc subunit on undecaprenyl-pyrophosphoryl-MurNAc-pentapeptide (lipid intermediate I) to form undecaprenyl-pyrophosphoryl-MurNAc-(pentapeptide)GlcNAc (lipid intermediate II). This is UDP-N-acetylglucosamine--N-acetylmuramyl-(pentapeptide) pyrophosphoryl-undecaprenol N-acetylglucosamine transferase from Clostridium perfringens (strain ATCC 13124 / DSM 756 / JCM 1290 / NCIMB 6125 / NCTC 8237 / Type A).